The following is an 801-amino-acid chain: Cadherin-20 (801 aa).

The N-terminal stretch at 1-34 (MWTTGRMSNAKSWLGLGTSLYFWALMDLATTVLS) is a signal peptide. Positions 35–59 (STPMPEVELDTLFSGKPQSHQRSRR) are excised as a propeptide. Over 60-619 (SWVWNQFFVL…AYMLPVSLSR (560 aa)) the chain is Extracellular. Cadherin domains are found at residues 61–165 (WVWN…EPKF), 166–274 (LDGP…PPRF), 275–389 (PQKH…PPVF), 390–494 (EPRF…APEF), and 494–610 (FPRF…SPEA). Asn261 is a glycosylation site (N-linked (GlcNAc...) asparagine). N-linked (GlcNAc...) asparagine glycosylation is found at Asn420, Asn461, and Asn542. A helical membrane pass occupies residues 620 to 640 (GALIAILACVFVLLVLVLLIL). Residues 641 to 801 (SMRRHRKQPY…GASEGPSPLW (161 aa)) lie on the Cytoplasmic side of the membrane.

It is found in the cell membrane. Functionally, cadherins are calcium-dependent cell adhesion proteins. They preferentially interact with themselves in a homophilic manner in connecting cells; cadherins may thus contribute to the sorting of heterogeneous cell types. This chain is Cadherin-20 (Cdh20), found in Rattus norvegicus (Rat).